A 115-amino-acid polypeptide reads, in one-letter code: U3-lycotoxin-Ls1q (115 aa).

The N-terminal stretch at 1-20 (MKFVLLFGVLLVTLFSYSSA) is a signal peptide. Positions 21-44 (EMFDDFDQADEDELLSLIEKEEAR) are excised as a propeptide. Disulfide bonds link Cys48–Cys63, Cys55–Cys72, Cys62–Cys87, and Cys74–Cys85.

This sequence belongs to the neurotoxin 19 (CSTX) family. 01 subfamily. Expressed by the venom gland.

It localises to the secreted. The protein is U3-lycotoxin-Ls1q of Lycosa singoriensis (Wolf spider).